We begin with the raw amino-acid sequence, 389 residues long: bZIP transcription factor 68 (389 aa).

The span at 1–16 shows a compositional bias: basic and acidic residues; sequence MGSSEMEKSGKEKEPK. 5 disordered regions span residues 1–42, 124–154, 170–236, 285–318, and 356–389; these read MGSS…VSAG, MAEA…KRSK, AGKN…NLPV, QPWL…RKQA, and SSLK…QDVA. Positions 19–32 are enriched in low complexity; it reads PPSTSSSAPATVVS. Residues 137–149 are compositionally biased toward basic and acidic residues; the sequence is GDGKPSDGKEKLP. K154 participates in a covalent cross-link: Glycyl lysine isopeptide (Lys-Gly) (interchain with G-Cter in ubiquitin). Positions 170–205 are enriched in low complexity; the sequence is AGKNSGASANGACSKSAESGSDGSSDGSDANSQNDS. Basic and acidic residues-rich tracts occupy residues 206 to 215 and 304 to 318; these read GSRHNGKDGE and SNRE…RKQA. Residues 295–358 enclose the bZIP domain; sequence EIKRQRRKQS…EELLAENSSL (64 aa). The interval 297-316 is basic motif; that stretch reads KRQRRKQSNRESARRSRLRK. Residues 323–358 are leucine-zipper; that stretch reads LAQRAEVLNGENSSLRAEINKLKSQYEELLAENSSL. Over residues 356-366 the composition is skewed to polar residues; sequence SSLKNKFSSAP. Residues 372 to 389 show a composition bias toward basic and acidic residues; the sequence is DLDKNEQEPQRSTRQDVA.

This sequence belongs to the bZIP family. In terms of assembly, monomer, homodimer and heterodimers with GBF1/BZIP41, GBF2/BZIP54 and GBF3/BZIP55. Heterodimers with BZIP16. Interacts with GIP1.

The protein resides in the nucleus. In terms of biological role, transcriptional activator that binds to the G-box motif (5'-CACGTG-3') and other cis-acting elements with 5'-ACGT-3' core, such as Hex, C-box and as-1 motifs. Possesses high binding affinity to G-box, much lower affinity to Hex and C-box, and little affinity to as-1 element. G-box and G-box-like motifs are cis-acting elements defined in promoters of certain plant genes which are regulated by such diverse stimuli as light-induction or hormone control. Binds to the G-box motif 5'-CACGTG-3' of LHCB2.4 (At3g27690) promoter. May act as transcriptional activator in light-regulated expression of LHCB2.4. Probably binds DNA as monomer. DNA-binding activity is redox-dependent. This chain is bZIP transcription factor 68, found in Arabidopsis thaliana (Mouse-ear cress).